The primary structure comprises 357 residues: Protein-arginine kinase (357 aa).

Residues 24-256 (VIISSRVRLA…LQLVTQERAA (233 aa)) enclose the Phosphagen kinase C-terminal domain. ATP is bound by residues 27–31 (SSRVR), His-93, Arg-127, 178–182 (RASVM), and 209–214 (RGLYGE). The RDXXRA motif of the pArg binding pocket involved in allosteric regulation signature appears at 339 to 344 (RDIFRA).

This sequence belongs to the ATP:guanido phosphotransferase family.

It carries out the reaction L-arginyl-[protein] + ATP = N(omega)-phospho-L-arginyl-[protein] + ADP + H(+). Its activity is regulated as follows. Appears to be allosterically activated by the binding of pArg-containing polypeptides to the pArg-binding pocket localized in the C-terminal domain of McsB. Catalyzes the specific phosphorylation of arginine residues in proteins. This is Protein-arginine kinase from Desulforamulus reducens (strain ATCC BAA-1160 / DSM 100696 / MI-1) (Desulfotomaculum reducens).